Consider the following 349-residue polypeptide: Shematrin-like protein 1 (349 aa).

An N-terminal signal peptide occupies residues M1–A16.

As to expression, prismatic layer of shell (at protein level).

Its subcellular location is the secreted. In Margaritifera margaritifera (Freshwater pearl mussel), this protein is Shematrin-like protein 1.